A 134-amino-acid chain; its full sequence is ATP synthase epsilon chain (134 aa).

It belongs to the ATPase epsilon chain family. As to quaternary structure, F-type ATPases have 2 components, CF(1) - the catalytic core - and CF(0) - the membrane proton channel. CF(1) has five subunits: alpha(3), beta(3), gamma(1), delta(1), epsilon(1). CF(0) has three main subunits: a, b and c.

Its subcellular location is the cell membrane. Its function is as follows. Produces ATP from ADP in the presence of a proton gradient across the membrane. This Listeria monocytogenes serotype 4b (strain F2365) protein is ATP synthase epsilon chain.